Here is a 232-residue protein sequence, read N- to C-terminus: Ion-translocating oxidoreductase complex subunit E (232 aa).

6 consecutive transmembrane segments (helical) span residues 18-38 (ALVQLLGLCPLLAVTATVTNG), 39-59 (LGLGLATTLVLIGSNATVSII), 69-89 (IPIFVMIIAAFVTVVQLLMNA), 93-113 (ELYQALGIFIPLIVTNCAIIG), 128-148 (AFDGLMMGLGFTVVLVLLGAM), and 182-202 (PFLLAILPPGAFLGMGLLIAA).

Belongs to the NqrDE/RnfAE family. The complex is composed of six subunits: RnfA, RnfB, RnfC, RnfD, RnfE and RnfG.

It localises to the cell inner membrane. Functionally, part of a membrane-bound complex that couples electron transfer with translocation of ions across the membrane. The protein is Ion-translocating oxidoreductase complex subunit E of Pseudoalteromonas atlantica (strain T6c / ATCC BAA-1087).